A 358-amino-acid polypeptide reads, in one-letter code: Molybdenum import ATP-binding protein ModC 2 (358 aa).

The ABC transporter domain occupies 1–234 (MPEQGIEAQL…PRLPLNHPDE (234 aa)). Residue 35-42 (GRSGSGKT) participates in ATP binding. A Mop domain is found at 293 to 358 (NSSILNILRV…AQIKSVALME (66 aa)).

This sequence belongs to the ABC transporter superfamily. Molybdate importer (TC 3.A.1.8) family. The complex is composed of two ATP-binding proteins (ModC), two transmembrane proteins (ModB) and a solute-binding protein (ModA).

Its subcellular location is the cell inner membrane. It carries out the reaction molybdate(out) + ATP + H2O = molybdate(in) + ADP + phosphate + H(+). Its function is as follows. Part of the ABC transporter complex ModABC involved in molybdenum import. Responsible for energy coupling to the transport system. This Azotobacter vinelandii protein is Molybdenum import ATP-binding protein ModC 2.